Reading from the N-terminus, the 448-residue chain is Phosphoglucosamine mutase (448 aa).

Ser101 acts as the Phosphoserine intermediate in catalysis. 4 residues coordinate Mg(2+): Ser101, Asp242, Asp244, and Asp246. Ser101 carries the post-translational modification Phosphoserine.

It belongs to the phosphohexose mutase family. It depends on Mg(2+) as a cofactor. Post-translationally, activated by phosphorylation.

The catalysed reaction is alpha-D-glucosamine 1-phosphate = D-glucosamine 6-phosphate. Catalyzes the conversion of glucosamine-6-phosphate to glucosamine-1-phosphate. The sequence is that of Phosphoglucosamine mutase from Nitrobacter winogradskyi (strain ATCC 25391 / DSM 10237 / CIP 104748 / NCIMB 11846 / Nb-255).